The primary structure comprises 383 residues: Presenilin-associated rhomboid-like protein A, mitochondrial (383 aa).

The N-terminal 37 residues, 1–37, are a transit peptide targeting the mitochondrion; that stretch reads MAWRSCFMKWTQINSINASSLCPKSTRLNIHPQQRCG. The tract at residues 35–75 is disordered; the sequence is RCGFRKTERPSESKKGVQETEAEAGGHNRAVPPKPVPPLPP. Residues 38–83 lie on the Mitochondrial matrix side of the membrane; that stretch reads FRKTERPSESKKGVQETEAEAGGHNRAVPPKPVPPLPPRRPHQLFR. Residues 39 to 52 are compositionally biased toward basic and acidic residues; it reads RKTERPSESKKGVQ. The segment covering 66–75 has biased composition (pro residues); sequence PPKPVPPLPP. The chain crosses the membrane as a helical span at residues 84-104; sequence PLVFTVGFTGCSFGAAAILQY. Residues 105-168 are Mitochondrial intermembrane-facing; it reads ESVKSRVQLA…FWSGLSEGQK (64 aa). A helical membrane pass occupies residues 169-189; that stretch reads TVTGIIALNTVVLCCWRVPAM. Residues 190–219 lie on the Mitochondrial matrix side of the membrane; sequence QRFLVKYFTSNPASKTRCLPMVLSSFSHYS. A helical membrane pass occupies residues 220-240; it reads VIHMVVNMYVLWTFSSSIVSL. Over 241–245 the chain is Mitochondrial intermembrane; it reads LGREQ. The chain crosses the membrane as a helical span at residues 246–266; that stretch reads FLALYLSGGVISTFVSYVFKT. Residues 267–271 lie on the Mitochondrial matrix side of the membrane; sequence ATGRL. Residues 272–292 traverse the membrane as a helical segment; sequence GPSLGASGSIMTVLAAVCTKI. Residue Ser-278 is the Nucleophile of the active site. Over 293 to 298 the chain is Mitochondrial intermembrane; sequence PEAKLG. Residues 299–319 traverse the membrane as a helical segment; it reads IVLLPVISFSAGNALKALVAL. Residues 320–334 lie on the Mitochondrial matrix side of the membrane; the sequence is DIAGLVLGWRFFDHA. The helical transmembrane segment at 335–355 threads the bilayer; the sequence is AHLGGALFGVWYIGYGHELIW. His-336 is an active-site residue. At 356-383 the chain is on the mitochondrial intermembrane side; that stretch reads RKREPLIKFWHELRNMSPGRPGPGGGGG.

This sequence belongs to the peptidase S54 family.

Its subcellular location is the mitochondrion inner membrane. The enzyme catalyses Cleaves type-1 transmembrane domains using a catalytic dyad composed of serine and histidine that are contributed by different transmembrane domains.. Required for the control of apoptosis during postnatal growth. Essential for proteolytic processing of an antiapoptotic form of opa1 which prevents the release of mitochondrial cytochrome c in response to intrinsic apoptotic signals. This chain is Presenilin-associated rhomboid-like protein A, mitochondrial (parla), found in Danio rerio (Zebrafish).